Reading from the N-terminus, the 603-residue chain is Vacuolar protein sorting-associated protein 33A (603 aa).

This sequence belongs to the STXBP/unc-18/SEC1 family. As to quaternary structure, probable component of the homotypic fusion and vacuole protein sorting (HOPS) complex consisting of the core class C Vps proteins vps-11, vps-16, vps-18, and which further associates with vps-33.1, vps-39 and vps-41. Interacts with spe-39. Ubiquitously expressed at high levels in somatic tissues including the pharynx, muscles, hypodermis, neurons, coelomocytes and spermatheca. Expressed in the intestine.

The protein resides in the lysosome. Its subcellular location is the early endosome. It is found in the late endosome. The protein localises to the apical cell membrane. In terms of biological role, plays a role in vesicle-mediated protein trafficking to lysosomal compartments including the endocytic membrane transport pathways. Believed to act as a component of the putative HOPS endosomal tethering complex which is proposed to be involved in the rab-5-to-rab-7 endosome conversion probably implicating sand-1, and via binding SNAREs and SNARE complexes to mediate tethering and docking events during SNARE-mediated membrane fusion. The HOPS complex is proposed to be recruited to rab-7 on the late endosomal membrane and to regulate late endocytic, phagocytic and autophagic traffic towards lysosomes. Within the HOPS complex, contributes to the normal development of gut granules in embryonic and adult intestinal cells. Required for endosome/lysosome fusion. Required for early embryonic development. The chain is Vacuolar protein sorting-associated protein 33A from Caenorhabditis elegans.